Here is a 274-residue protein sequence, read N- to C-terminus: Protein FAM210A (274 aa).

The span at 51–66 (KWLHSQPKQQDSSTKT) shows a compositional bias: polar residues. Residues 51–91 (KWLHSQPKQQDSSTKTPVHDLPSGSQHQSEESSPSAKSSIS) are disordered. The span at 81–91 (ESSPSAKSSIS) shows a compositional bias: low complexity. A DUF1279 domain is found at 105–217 (DQSIGLLKRF…GYLSTPPLVK (113 aa)). A helical transmembrane segment spans residues 124–144 (VLIPVHLVTSSFWFGSFYYAA). The stretch at 221–274 (QDRMEETKELFTEKMEETRDIISGKMEETKDRISEKLQETKDRVAFRKKKNEEM) forms a coiled coil.

The protein belongs to the FAM210 family.

The protein resides in the membrane. It is found in the mitochondrion. The protein localises to the cytoplasm. Functionally, may play a role in the structure and strength of both muscle and bone. The sequence is that of Protein FAM210A (fam210a) from Xenopus tropicalis (Western clawed frog).